A 483-amino-acid chain; its full sequence is Probable glycosyltransferase 4 (483 aa).

At 1–26 (MSKLQDRHGGEAAADVGRRARHQRLL) the chain is on the cytoplasmic side. The helical; Signal-anchor for type II membrane protein transmembrane segment at 27–47 (LSFPVFPIVLLLLAPCTIFFF) threads the bilayer. Over 48-483 (TSGDVPLPRI…KKTSRAARPM (436 aa)) the chain is Lumenal. Residues 71-119 (AVAADTSPPPPSPPSSSPPPLSFPPPPPPPSSPPPPALPVVDDHSDTQR) are disordered. The span at 77–108 (SPPPPSPPSSSPPPLSFPPPPPPPSSPPPPAL) shows a compositional bias: pro residues. N-linked (GlcNAc...) asparagine glycosylation occurs at asparagine 448.

Belongs to the glycosyltransferase 34 family.

The protein resides in the golgi apparatus membrane. Its function is as follows. Probable glycosyltransferase that may be involved in the biosynthesis of xyloglucan. The chain is Probable glycosyltransferase 4 from Oryza sativa subsp. indica (Rice).